Consider the following 102-residue polypeptide: Circadian clock protein KaiB3 (102 aa).

Belongs to the KaiB family. Purifies as a monomer and homotetramer. Interacts with KaiC1 and KaiC3.

Its function is as follows. A paralog of KaiB1, the major clock oscillator protein in this species. KaiB3 and KaiC3 may cross talk with the core oscillator. The monomer reduces the ATPase activity of KaiC3 by 55%, the homotetramer has no effect. In terms of biological role, a metamorphic protein which may reversibly switch between an inactive tetrameric fold and a rare thioredoxin-like monomeric fold (KaiB(fs)). The protein is Circadian clock protein KaiB3 of Synechocystis sp. (strain ATCC 27184 / PCC 6803 / Kazusa).